The primary structure comprises 141 residues: Small ribosomal subunit protein uS8 (141 aa).

This sequence belongs to the universal ribosomal protein uS8 family. Part of the 30S ribosomal subunit. Contacts proteins S5 and S12.

Its function is as follows. One of the primary rRNA binding proteins, it binds directly to 16S rRNA central domain where it helps coordinate assembly of the platform of the 30S subunit. The polypeptide is Small ribosomal subunit protein uS8 (Mycoplasma genitalium (strain ATCC 33530 / DSM 19775 / NCTC 10195 / G37) (Mycoplasmoides genitalium)).